The following is a 189-amino-acid chain: Glycerol-3-phosphate acyltransferase (189 aa).

The next 5 helical transmembrane spans lie at 1–21 (MFWL…AILL), 51–71 (LAIL…LIAS), 77–97 (LQDQ…PLYF), 111–131 (MLLG…LLTF), and 151–171 (LLAW…LLIV).

It belongs to the PlsY family. As to quaternary structure, probably interacts with PlsX.

Its subcellular location is the cell inner membrane. It catalyses the reaction an acyl phosphate + sn-glycerol 3-phosphate = a 1-acyl-sn-glycero-3-phosphate + phosphate. It participates in lipid metabolism; phospholipid metabolism. Its function is as follows. Catalyzes the transfer of an acyl group from acyl-phosphate (acyl-PO(4)) to glycerol-3-phosphate (G3P) to form lysophosphatidic acid (LPA). This enzyme utilizes acyl-phosphate as fatty acyl donor, but not acyl-CoA or acyl-ACP. The sequence is that of Glycerol-3-phosphate acyltransferase from Pseudomonas fluorescens (strain Pf0-1).